A 214-amino-acid chain; its full sequence is Charged multivesicular body protein 2b-B (214 aa).

Residues 25 to 55 adopt a coiled-coil conformation; the sequence is QRAITRDRAALEKQEKQLEMEIKKMAKTGNK. The tract at residues 178 to 200 is disordered; that stretch reads MAKAPSAAKGLPSTSAAKSKGIS. The MIT-interacting motif motif lies at 202 to 212; it reads EEIERQLKALG.

The protein belongs to the SNF7 family. As to quaternary structure, probable core component of the endosomal sorting required for transport complex III (ESCRT-III). ESCRT-III components are thought to multimerize to form a flat lattice on the perimeter membrane of the endosome.

It localises to the cytoplasm. The protein resides in the cytosol. It is found in the late endosome membrane. Probable core component of the endosomal sorting required for transport complex III (ESCRT-III) which is involved in multivesicular bodies (MVBs) formation and sorting of endosomal cargo proteins into MVBs. MVBs contain intraluminal vesicles (ILVs) that are generated by invagination and scission from the limiting membrane of the endosome and mostly are delivered to lysosomes enabling degradation of membrane proteins, such as stimulated growth factor receptors, lysosomal enzymes and lipids. The sequence is that of Charged multivesicular body protein 2b-B (chmp2b-b) from Xenopus laevis (African clawed frog).